We begin with the raw amino-acid sequence, 187 residues long: CRISPR system Cmr subunit Cmr1-2 (187 aa).

The protein belongs to the CRISPR system Cmr1 family. In terms of assembly, part of the type III-B Cmr ribonucleoprotein (RNP) complex. This is an elongated RNP with Cmr2 and Cmr3 as the base, with Cmr4 and Cmr5 forming a helical core along the mature crRNA (39 or 45 nt in length), while the complex is capped by Cmr6 and Cmr1. The 5' end of the crRNA is bound to Cmr2 and Cmr3, while Cmr6 and a Cmr1 subunit (Cmr1-1 or Cmr1-2) cap the 3' end of the crRNA. The target RNA lies antiparallel to the crRNA, with its 5' end near Cmr1 and Cmr6 and its 3' end near Cmr2 and Cmr3; major target cleavage occurs nears the junction of Cmr1/Cmr6 and Cmr4/Cmr, with minor cleavage occurring at 6 nt intervals which coincide with the proposed spacing of Cmr4 subunits.

It localises to the cytoplasm. Functionally, CRISPR (clustered regularly interspaced short palindromic repeat), is an adaptive immune system that provides protection against mobile genetic elements (viruses, transposable elements and conjugative plasmids). CRISPR clusters contain sequences complementary to antecedent mobile elements and target invading nucleic acids. CRISPR clusters are transcribed and processed into CRISPR RNA (crRNA), formerly called psiRNA (prokaryotic silencing) in this organism. Part of the Cmr ribonucleoprotein complex which has divalent cation-dependent endoribonuclease activity specific for ssRNA complementary to the crRNA (target RNA), generating 5' hydroxy- and 3' phosphate or 2'-3' cyclic phosphate termini. Cmr4 is probably the subunit that cleaves target RNA. Cmr complex does not cleave ssDNA complementary to the crRNA. Cleavage of invading RNA is guided by the crRNA; substrate cleavage occurs a fixed distance (14 nt) from the 3' end of the crRNA. In vitro reconstitution shows Cmr1-2 and Cmr5 are not absolutely necessary for target cleavage. The polypeptide is CRISPR system Cmr subunit Cmr1-2 (Pyrococcus furiosus (strain ATCC 43587 / DSM 3638 / JCM 8422 / Vc1)).